The sequence spans 441 residues: Probable D-serine dehydratase (441 aa).

Position 117 is an N6-(pyridoxal phosphate)lysine (K117).

It belongs to the serine/threonine dehydratase family. DsdA subfamily. The cofactor is pyridoxal 5'-phosphate.

The catalysed reaction is D-serine = pyruvate + NH4(+). The protein is Probable D-serine dehydratase of Acinetobacter baylyi (strain ATCC 33305 / BD413 / ADP1).